The primary structure comprises 480 residues: RuvB-like helicase 2 (480 aa).

76 to 83 lines the ATP pocket; that stretch reads GPPSTGKT.

Belongs to the RuvB family. May form heterododecamers with RVB1. Component of the SWR1 chromatin remodeling complex, the INO80 chromatin remodeling complex, and of the R2TP complex.

It localises to the nucleus. It catalyses the reaction ATP + H2O = ADP + phosphate + H(+). DNA helicase which participates in several chromatin remodeling complexes, including the SWR1 and the INO80 complexes. The SWR1 complex mediates the ATP-dependent exchange of histone H2A for the H2A variant HZT1 leading to transcriptional regulation of selected genes by chromatin remodeling. The INO80 complex remodels chromatin by shifting nucleosomes and is involved in DNA repair. Also involved in pre-rRNA processing. The polypeptide is RuvB-like helicase 2 (RVB2) (Debaryomyces hansenii (strain ATCC 36239 / CBS 767 / BCRC 21394 / JCM 1990 / NBRC 0083 / IGC 2968) (Yeast)).